The following is a 347-amino-acid chain: N6-Methyl-AMP deaminase-L (347 aa).

Zn(2+) is bound by residues histidine 19 and histidine 21. N(6)-methyl-AMP is bound by residues histidine 21, asparagine 23, histidine 69, 101 to 104 (STPR), aspartate 142, and glycine 175. Histidine 202 is a Zn(2+) binding site. The N(6)-methyl-AMP site is built by glutamate 205, aspartate 283, and aspartate 284. Glutamate 205 (proton donor) is an active-site residue. A Zn(2+)-binding site is contributed by aspartate 283.

Belongs to the metallo-dependent hydrolases superfamily. Adenosine and AMP deaminases family. As to quaternary structure, monomer. The cofactor is Zn(2+).

It carries out the reaction N(6)-methyl-AMP + H2O + H(+) = IMP + methylamine. Catalyzes the hydrolysis of the free cytosolic methylated adenosine nucleotide N(6)-methyl-AMP (N6-mAMP) to produce inositol monophosphate (IMP) and methylamine. Is required for the catabolism of cytosolic N6-mAMP, which is derived from the degradation of mRNA containing N6-methylated adenine (m6A). In Xenopus laevis (African clawed frog), this protein is N6-Methyl-AMP deaminase-L (mapda.L).